The sequence spans 331 residues: Glycerol-3-phosphate dehydrogenase [NAD(P)+] (331 aa).

Positions 11, 30, and 105 each coordinate NADPH. Residues Lys105, Gly134, and Ser136 each coordinate sn-glycerol 3-phosphate. NADPH is bound at residue Ala138. Lys189, Asp242, Ser252, Arg253, and Asn254 together coordinate sn-glycerol 3-phosphate. Lys189 (proton acceptor) is an active-site residue. Arg253 lines the NADPH pocket. NADPH-binding residues include Val277 and Glu279.

This sequence belongs to the NAD-dependent glycerol-3-phosphate dehydrogenase family.

The protein localises to the cytoplasm. The enzyme catalyses sn-glycerol 3-phosphate + NAD(+) = dihydroxyacetone phosphate + NADH + H(+). It carries out the reaction sn-glycerol 3-phosphate + NADP(+) = dihydroxyacetone phosphate + NADPH + H(+). Its pathway is membrane lipid metabolism; glycerophospholipid metabolism. Catalyzes the reduction of the glycolytic intermediate dihydroxyacetone phosphate (DHAP) to sn-glycerol 3-phosphate (G3P), the key precursor for phospholipid synthesis. The chain is Glycerol-3-phosphate dehydrogenase [NAD(P)+] from Herminiimonas arsenicoxydans.